The primary structure comprises 682 residues: Tetratricopeptide repeat protein 39B (682 aa).

2 TPR repeats span residues 393–426 (SLVLFYHARIELLKGNLEEAQEVFQKCISVQEEW) and 626–659 (PFTLFELASLYKSQGEIDKAIKFLETARNNYKDY).

Belongs to the TTC39 family.

Functionally, regulates high density lipoprotein (HDL) cholesterol metabolism by promoting the ubiquitination and degradation of the oxysterols receptors LXR (NR1H2 and NR1H3). The sequence is that of Tetratricopeptide repeat protein 39B from Homo sapiens (Human).